The following is a 437-amino-acid chain: Nuclear hormone receptor family member nhr-28 (437 aa).

Residues 5 to 80 (KSPCSVCGEA…VGMRKSAVQR (76 aa)) constitute a DNA-binding region (nuclear receptor). NR C4-type zinc fingers lie at residues 8-28 (CSVC…CRAC) and 44-68 (CRAM…FTKC). The 262-residue stretch at 115–376 (YEETGMPTLS…ETFYELVSGR (262 aa)) folds into the NR LBD domain.

This sequence belongs to the nuclear hormone receptor family. In terms of tissue distribution, expressed in the pharynx, intestine and hypodermis.

It localises to the nucleus. Orphan nuclear receptor. The polypeptide is Nuclear hormone receptor family member nhr-28 (nhr-28) (Caenorhabditis elegans).